Here is a 204-residue protein sequence, read N- to C-terminus: dITP/XTP pyrophosphatase (204 aa).

8 to 13 is a binding site for substrate; sequence SRNRKK. The active-site Proton acceptor is the Asp-73. Residue Asp-73 participates in Mg(2+) binding. Substrate-binding positions include Ser-74, 155–158, Lys-179, and 184–185; these read FGYD and HR.

Belongs to the HAM1 NTPase family. In terms of assembly, homodimer. Mg(2+) is required as a cofactor.

It catalyses the reaction XTP + H2O = XMP + diphosphate + H(+). The enzyme catalyses dITP + H2O = dIMP + diphosphate + H(+). It carries out the reaction ITP + H2O = IMP + diphosphate + H(+). Its function is as follows. Pyrophosphatase that catalyzes the hydrolysis of nucleoside triphosphates to their monophosphate derivatives, with a high preference for the non-canonical purine nucleotides XTP (xanthosine triphosphate), dITP (deoxyinosine triphosphate) and ITP. Seems to function as a house-cleaning enzyme that removes non-canonical purine nucleotides from the nucleotide pool, thus preventing their incorporation into DNA/RNA and avoiding chromosomal lesions. This Mycolicibacterium paratuberculosis (strain ATCC BAA-968 / K-10) (Mycobacterium paratuberculosis) protein is dITP/XTP pyrophosphatase.